Here is a 1721-residue protein sequence, read N- to C-terminus: Latent-transforming growth factor beta-binding protein 1 (1721 aa).

A signal peptide spans 1 to 23 (MAGAWLRWGLLLWAGLLASSAHG). A compositionally biased stretch (low complexity) spans 64-81 (RSSAAAGAPSRASPGVPS). The interval 64 to 158 (RSSAAAGAPS…SGGGSRLQVH (95 aa)) is disordered. Pro residues predominate over residues 99 to 111 (RPPPPPPPEPARP). A compositionally biased stretch (low complexity) spans 112 to 130 (AVPGGQLHPNPGGHPAAAP). The region spanning 187 to 219 (TKPSCVPPCQNGGMCLRPQLCVCKPGTKGKACE) is the EGF-like 1 domain. Intrachain disulfides connect Cys-191–Cys-201, Cys-195–Cys-207, and Cys-209–Cys-218. Residues 228 to 259 (SPVFGGQSPGAASSWGPPEQAAKHTSSKKADT) are disordered. Asn-347 and Asn-378 each carry an N-linked (GlcNAc...) asparagine glycan. The 33-residue stretch at 399 to 431 (RVVICHLPCMNGGQCSSRDKCQCPPNFTGKLCQ) folds into the EGF-like 2 domain. 6 disulfides stabilise this stretch: Cys-403–Cys-413, Cys-407–Cys-419, Cys-421–Cys-430, Cys-559–Cys-581, Cys-568–Cys-594, and Cys-582–Cys-597. N-linked (GlcNAc...) asparagine glycosylation is present at Asn-424. One can recognise a TB 1 domain in the interval 557 to 609 (GRCFQETIGSQCGKALPGLSKQEDCCGTVGTSWGFNKCQKCPKKPSYHGYNQM). Asn-620 carries an N-linked (GlcNAc...) asparagine glycan. The EGF-like 3; calcium-binding domain occupies 626–663 (DINECQLQGVCPNGECLNTMGSYRCTCKIGFGPDPTFS). Cystine bridges form between Cys-630-Cys-641, Cys-636-Cys-650, Cys-652-Cys-665, Cys-679-Cys-702, Cys-689-Cys-714, Cys-703-Cys-717, and Cys-704-Cys-729. An O-linked (Glc) serine glycan is attached at Ser-647. A TB 2 domain is found at 677 to 729 (GPCYRLVSSGRQCMHPLSVHLTKQLCCCSVGKAWGPHCEKCPLPGTAAFKEIC). The disordered stretch occupies residues 750–811 (VGKGPVFVKP…APPEKEIPSL (62 aa)). O-linked (GalNAc...) threonine glycans are attached at residues Thr-769 and Thr-801. One can recognise an EGF-like 4; calcium-binding domain in the interval 873–910 (EINECTVNPDICGAGHCINLPVRYTCICYEGYRFSEQQ). 29 disulfide bridges follow: Cys-877/Cys-889, Cys-884/Cys-898, Cys-900/Cys-913, Cys-919/Cys-931, Cys-926/Cys-940, Cys-942/Cys-955, Cys-961/Cys-972, Cys-967/Cys-981, Cys-984/Cys-996, Cys-1002/Cys-1013, Cys-1008/Cys-1022, Cys-1025/Cys-1036, Cys-1042/Cys-1053, Cys-1048/Cys-1062, Cys-1064/Cys-1077, Cys-1083/Cys-1094, Cys-1089/Cys-1103, Cys-1105/Cys-1118, Cys-1124/Cys-1135, Cys-1130/Cys-1144, Cys-1146/Cys-1159, Cys-1165/Cys-1177, Cys-1172/Cys-1186, Cys-1188/Cys-1200, Cys-1206/Cys-1218, Cys-1212/Cys-1227, Cys-1229/Cys-1242, Cys-1248/Cys-1260, and Cys-1254/Cys-1269. Positions 915-956 (DIDECTQVQHLCSQGRCENTEGSFLCICPAGFMASEEGTNCI) constitute an EGF-like 5; calcium-binding domain. Ser-937 carries O-linked (Glc) serine glycosylation. In terms of domain architecture, EGF-like 6; calcium-binding spans 957 to 997 (DVDECLRPDVCGEGHCVNTVGAFRCEYCDSGYRMTQRGRCE). Asn-974 carries the (3R)-3-hydroxyasparagine modification. An EGF-like 7; calcium-binding domain is found at 998–1037 (DIDECLNPSTCPDEQCVNSPGSYQCVPCTEGFRGWNGQCL). Ser-1019 carries O-linked (Glc) serine glycosylation. One can recognise an EGF-like 8; calcium-binding domain in the interval 1038–1078 (DVDECLEPNVCANGDCSNLEGSYMCSCHKGYTRTPDHKHCR). The O-linked (Glc) serine glycan is linked to Ser-1059. In terms of domain architecture, EGF-like 9; calcium-binding spans 1079–1119 (DIDECQQGNLCVNGQCKNTEGSFRCTCGQGYQLSAAKDQCE). In terms of domain architecture, EGF-like 10; calcium-binding spans 1120–1160 (DIDECQHRHLCAHGQCRNTEGSFQCVCDQGYRASGLGDHCE). The residue at position 1137 (Asn-1137) is a (3R)-3-hydroxyasparagine. O-linked (Glc) serine glycosylation occurs at Ser-1141. The 41-residue stretch at 1161-1201 (DINECLEDKSVCQRGDCINTAGSYDCTCPDGFQLDDNKTCQ) folds into the EGF-like 11; calcium-binding domain. The short motif at 1174–1176 (RGD) is the Cell attachment site element. N-linked (GlcNAc...) asparagine glycosylation occurs at Asn-1197. The EGF-like 12; calcium-binding domain maps to 1202-1243 (DINECEHPGLCGPQGECLNTEGSFHCVCQQGFSISADGRTCE). O-linked (Glc) serine glycosylation is present at Ser-1224. An EGF-like 13; calcium-binding domain is found at 1244 to 1281 (DIDECVNNTVCDSHGFCDNTAGSFRCLCYQGFQAPQDG). A glycan (N-linked (GlcNAc...) asparagine) is linked at Asn-1250. The region spanning 1286–1328 (DVNECELLSGVCGEAFCENVEGSFLCVCADENQEYSPMTGQCR) is the EGF-like 14; calcium-binding domain. Residues 1344–1411 (EEKKECYYNL…PKGKGFVPAG (68 aa)) form an 8-Cys3 region region. The TB 3 domain occupies 1347–1401 (KECYYNLNDASLCDNVLAPNVTKQECCCTSGVGWGDNCEIFPCPVLGTAEFTEMC). 4 disulfide bridges follow: Cys-1349-Cys-1372, Cys-1359-Cys-1384, Cys-1373-Cys-1389, and Cys-1374-Cys-1401. The N-linked (GlcNAc...) asparagine glycan is linked to Asn-1366. At Ser-1414 the chain carries Phosphoserine; by FAM20C. In terms of domain architecture, EGF-like 15; calcium-binding spans 1424–1466 (DADECLLFGQEICKNGFCLNTRPGYECYCKQGTYYDPVKLQCF). An EGF-like 16; calcium-binding domain is found at 1467-1503 (DMDECQDPSSCIDGQCVNTEGSYNCFCTHPMVLDASE). 6 disulfide bridges follow: Cys-1471–Cys-1482, Cys-1477–Cys-1491, Cys-1526–Cys-1550, Cys-1536–Cys-1562, Cys-1551–Cys-1565, and Cys-1552–Cys-1577. Ser-1488 carries an O-linked (Glc) serine glycan. The C-terminal domain stretch occupies residues 1507–1721 (IRPAESNEQI…LNLEKDSDLE (215 aa)). Positions 1524-1577 (DLCWEHLSDEYVCSRPLVGKQTTYTECCCLYGEAWGMQCALCPLKDSDDYAQLC) constitute a TB 4 domain. 2 positions are modified to phosphoserine: Ser-1597 and Ser-1616. In terms of domain architecture, EGF-like 17 spans 1621–1657 (QAEECGILNGCENGRCVRVQEGYTCDCFDGYHLDTAK). Intrachain disulfides connect Cys-1625-Cys-1636, Cys-1631-Cys-1645, Cys-1666-Cys-1681, Cys-1676-Cys-1690, and Cys-1692-Cys-1705. The EGF-like 18; calcium-binding domain occupies 1662 to 1706 (DVNECDELNNRMSLCKNAKCINTDGSYKCLCLPGYVPSDKPNYCT). The O-linked (Glc) serine glycan is linked to Ser-1687.

This sequence belongs to the LTBP family. As to quaternary structure, interacts with TGFB1; associates via disulfide bonds with the Latency-associated peptide chain (LAP) regulatory chain of TGFB1, leading to regulate activation of TGF-beta-1. LTBP1 does not bind directly to TGF-beta-1, the active chain of TGFB1. Interacts (via C-terminal domain) with FBN1 (via N-terminal domain). Interacts with FBN2. Interacts with ADAMTSL2. Interacts with EFEMP2. In terms of processing, contains hydroxylated asparagine residues. Isoform Short N-terminus is blocked. Post-translationally, two intrachain disulfide bonds from the TB3 domain are rearranged upon TGFB1 binding, and form interchain bonds with TGFB1 propeptide, anchoring it to the extracellular matrix. In terms of processing, O-glycosylated on serine residues by POGLUT2 and POGLUT3. As to expression, expressed in the aorta (at protein level). Isoform Long: Expressed in fibroblasts.

The protein localises to the secreted. The protein resides in the extracellular space. It is found in the extracellular matrix. Functionally, key regulator of transforming growth factor beta (TGFB1, TGFB2 and TGFB3) that controls TGF-beta activation by maintaining it in a latent state during storage in extracellular space. Associates specifically via disulfide bonds with the Latency-associated peptide (LAP), which is the regulatory chain of TGF-beta, and regulates integrin-dependent activation of TGF-beta. Outcompeted by LRRC32/GARP for binding to LAP regulatory chain of TGF-beta. The protein is Latent-transforming growth factor beta-binding protein 1 of Homo sapiens (Human).